A 1227-amino-acid polypeptide reads, in one-letter code: MKLKEIDRTAMQAWSPAQQHPIYLATGTSAQQLDASFSTNASLEIFELDLSDPSLDMKSCATFSSAHRYHKLIWGPHSMTAGERVSGVLIAGGENGNVILYDPAKIIAGDTEVIIAQKDKHTGPVRALDVNMFQTNLVASGANESEIYIWDLNNFATPMTPGAKTQPLEDISCIAWNRQVQHILASASPSGRATVWDLRKNEPIIKVSDHNNRMHCSGLAWHPDVATQMVLASEDDRLPVIQMWDLRFTSSPLRVLESHTRGILAIAWSMADSELLLSCGKDAKILCSNPNTGEVLYELPTNMQWCFDIQWCPRNPAILSAASFDGRLRIYSIMGGSTDGLRQKHVDQLSSSFGNLDPFGTGQPLPPLQLPQQTAPQSVVLPLKKPPKWIRRPVGASFSFGGKLVTFENAKPQQQPGIDQQPQHHYVYVSQVVTEKEFLARSTQLQEAVQSEGFVSYCQKKVDMAQADFERNVWSFLKVNFEEDSRAKYLELLGYRKDDLKNKITSALNLNKECCADGELGEAPTESDVPLLNKGDEGQTAEEHFLGERAKDSKQETEDLGSERKTFNISVSGDVDGLITQALLTGNFESAVDLCLHDNRMADAIILAIAGGQELLSRTQEKYFSKIQSKITRLITAVVTKNWKEIVLSCDLQNWREALAAVLTYARPDEFAALCDLLGNRLESEGDSLLRTQACLCYICAGNVEKLVACWSKVQDGNSPLSLQDLIEKVVILRKAVQLTQAVDPNAVGALLAEKMSQYANLLAAQGSIAAALTFLPANTDQPDIVLLRDRLCRAQGELPAGQEAIKAPYERQPMPKDRAGPVAGQVPGPQASAQQYYQQGDKPPPPGFIMPGAINPSAPPQQATSPSYNMYSQAGTRPAYPQTYQTTQQYSFGTGETALYQPQQPVAAPASASYPSPASNTNPPYLPAAQPVPSPLYPGQPQPSPTSLNPASSFPPPPSGASFQHGRPGLPATSVAYALPTGPTGTLPAASDLPASQRTGPQNGWNDPPALNRAAKKKKVPDNFMPPVPITSPIMNPLADPQAQMQQPPAAPVGTPSFQPQQLSTGQQAPLGPYAPQALGPCVVPPTTFKPRTEGAPGAPIGNAIQALPTEKITKKPIPEEHLILKTTFEALIQRCLLSASDPQTKRKLDDANKRLEFLYDKLREQTLSPAIVSGLHNIVKSIETRNYVEGLNIHMHIVSTSNFSETSAFMPVLKVVLIQANKLGV.

WD repeat units follow at residues 4-47, 64-111, 120-160, 166-206, 209-254, 258-298, and 301-342; these read KEID…EIFE, SSAH…AGDT, KHTG…TPMT, QPLE…PIIK, DHNN…SPLR, SHTR…VLYE, and TNMQ…DGLR. Residues 397-430 form a WD 8; interaction with SEC13 repeat; sequence SFSFGGKLVTFENAKPQQQPGIDQQPQHHYVYVS. Disordered regions lie at residues 804–875, 905–1008, and 1040–1075; these read EAIK…YSQA, QPVA…GWND, and ADPQAQMQQPPAAPVGTPSFQPQQLSTGQQAPLGPY. Residues 905 to 924 are compositionally biased toward low complexity; the sequence is QPVAAPASASYPSPASNTNP. Pro residues predominate over residues 925–945; it reads PYLPAAQPVPSPLYPGQPQPS. Residues 995 to 1006 are compositionally biased toward polar residues; sequence PASQRTGPQNGW. A compositionally biased stretch (low complexity) spans 1040–1049; it reads ADPQAQMQQP. Positions 1057–1069 are enriched in polar residues; that stretch reads PSFQPQQLSTGQQ.

Belongs to the WD repeat SEC31 family. In terms of assembly, COPII is composed of at least 5 proteins: the SEC23/24 complex, the SEC13/31 complex and SAR1. SEC13 and SEC31 make a 2:2 tetramer that forms the edge element of the COPII outer coat. The tetramer self-assembles in multiple copies to form the complete polyhedral cage. Interacts (via WD 8) with SEC13.

It localises to the cytoplasm. The protein resides in the cytoplasmic vesicle. The protein localises to the COPII-coated vesicle membrane. Its subcellular location is the endoplasmic reticulum membrane. Its function is as follows. Component of the coat protein complex II (COPII) which promotes the formation of transport vesicles from the endoplasmic reticulum (ER). The coat has two main functions, the physical deformation of the endoplasmic reticulum membrane into vesicles and the selection of cargo molecules. This is Protein transport protein Sec31A (SEC31A) from Gallus gallus (Chicken).